The primary structure comprises 78 residues: Large ribosomal subunit protein eL20 (78 aa).

This sequence belongs to the eukaryotic ribosomal protein eL20 family. Part of the 50S ribosomal subunit. Binds 23S rRNA.

The sequence is that of Large ribosomal subunit protein eL20 from Nanoarchaeum equitans (strain Kin4-M).